Reading from the N-terminus, the 166-residue chain is Ureidoglycolate lyase (166 aa).

The protein belongs to the ureidoglycolate lyase family. As to quaternary structure, homodimer. The cofactor is Ni(2+).

It carries out the reaction (S)-ureidoglycolate = urea + glyoxylate. The protein operates within nitrogen metabolism; (S)-allantoin degradation. Its function is as follows. Catalyzes the catabolism of the allantoin degradation intermediate (S)-ureidoglycolate, generating urea and glyoxylate. Involved in the utilization of allantoin as nitrogen source. This Azotobacter vinelandii (strain DJ / ATCC BAA-1303) protein is Ureidoglycolate lyase.